A 239-amino-acid polypeptide reads, in one-letter code: Transcriptional regulatory protein RstA (239 aa).

In terms of domain architecture, Response regulatory spans 3–116 (TIVFVEDDAE…VLLARLRLHL (114 aa)). Residue D52 is modified to 4-aspartylphosphate. Positions 136 to 235 (YKALHFGTLT…VRNKGYLFAP (100 aa)) form a DNA-binding region, ompR/PhoB-type.

In terms of processing, phosphorylated by RstB.

It localises to the cytoplasm. In terms of biological role, member of the two-component regulatory system RstB/RstA. This Escherichia coli (strain K12) protein is Transcriptional regulatory protein RstA (rstA).